The sequence spans 65 residues: Large ribosomal subunit protein bL35 (65 aa).

The disordered stretch occupies residues 1 to 26; sequence MPKIKTVRGAAKRFKKTASGGFKRKQ. Residues 10–26 show a composition bias toward basic residues; sequence AAKRFKKTASGGFKRKQ.

This sequence belongs to the bacterial ribosomal protein bL35 family.

The protein is Large ribosomal subunit protein bL35 of Haemophilus ducreyi (strain 35000HP / ATCC 700724).